The sequence spans 151 residues: MTYKNILDKLVGKWIHQRTSYFIHNQQIDYHQEEIKLKQIDNIYISTKDNNSLYQYELSNKINNQKIYYIFSKQEESEFGKLHKITNDEIKYYRFTIHTHNCIKIESVRENISYNEYIYLINNRFKITISILKRGQKYLATSFISEIKIFN.

Belongs to the CpcS/CpeS biliprotein lyase family.

It is found in the plastid. It localises to the chloroplast. Might function to covalently attach a chromophore to Cys residue(s) of phycobiliproteins. The sequence is that of Chromophore lyase CpcS/CpeS homolog from Gracilaria tenuistipitata var. liui (Red alga).